The following is a 272-amino-acid chain: Ribosomal RNA small subunit methyltransferase A (272 aa).

S-adenosyl-L-methionine is bound by residues asparagine 18, leucine 20, glycine 45, glutamate 66, aspartate 91, and asparagine 113.

This sequence belongs to the class I-like SAM-binding methyltransferase superfamily. rRNA adenine N(6)-methyltransferase family. RsmA subfamily.

It localises to the cytoplasm. It catalyses the reaction adenosine(1518)/adenosine(1519) in 16S rRNA + 4 S-adenosyl-L-methionine = N(6)-dimethyladenosine(1518)/N(6)-dimethyladenosine(1519) in 16S rRNA + 4 S-adenosyl-L-homocysteine + 4 H(+). Specifically dimethylates two adjacent adenosines (A1518 and A1519) in the loop of a conserved hairpin near the 3'-end of 16S rRNA in the 30S particle. May play a critical role in biogenesis of 30S subunits. This chain is Ribosomal RNA small subunit methyltransferase A, found in Photorhabdus laumondii subsp. laumondii (strain DSM 15139 / CIP 105565 / TT01) (Photorhabdus luminescens subsp. laumondii).